A 522-amino-acid polypeptide reads, in one-letter code: Glutamate--cysteine ligase, chloroplastic (522 aa).

Residues 1 to 45 (MALMSQAGSSHCIYSEKMKCISGHSSITSNMEMLKMKDICFGNIS) constitute a chloroplast transit peptide. An intrachain disulfide couples cysteine 186 to cysteine 406.

It belongs to the carboxylate-amine ligase family. Glutamate--cysteine ligase type 2 subfamily. As to quaternary structure, homodimer or monomer when oxidized or reduced, respectively. The Cys-186-Cys-406 disulfide bridge is known to modulate the enzyme activity according to the redox status. The oxidized form constitutes the active enzyme.

It is found in the plastid. The protein localises to the chloroplast. The catalysed reaction is L-cysteine + L-glutamate + ATP = gamma-L-glutamyl-L-cysteine + ADP + phosphate + H(+). The protein operates within sulfur metabolism; glutathione biosynthesis; glutathione from L-cysteine and L-glutamate: step 1/2. This chain is Glutamate--cysteine ligase, chloroplastic (GSH1), found in Nicotiana tabacum (Common tobacco).